The sequence spans 378 residues: Chaperone protein DnaJ (378 aa).

The J domain occupies 5–69; that stretch reads EYYDRLGVSK…QKRAAYDQYG (65 aa). A CR-type zinc finger spans residues 134-216; that stretch reads GVEKEVSYNR…CHGTGHEKQA (83 aa). Zn(2+) contacts are provided by cysteine 147, cysteine 150, cysteine 164, cysteine 167, cysteine 190, cysteine 193, cysteine 204, and cysteine 207. CXXCXGXG motif repeat units follow at residues 147 to 154, 164 to 171, 190 to 197, and 204 to 211; these read CGTCLGSG, CRKCHGSG, CDICHGSG, and CQTCHGTG.

The protein belongs to the DnaJ family. Homodimer. Zn(2+) is required as a cofactor.

It is found in the cytoplasm. Participates actively in the response to hyperosmotic and heat shock by preventing the aggregation of stress-denatured proteins and by disaggregating proteins, also in an autonomous, DnaK-independent fashion. Unfolded proteins bind initially to DnaJ; upon interaction with the DnaJ-bound protein, DnaK hydrolyzes its bound ATP, resulting in the formation of a stable complex. GrpE releases ADP from DnaK; ATP binding to DnaK triggers the release of the substrate protein, thus completing the reaction cycle. Several rounds of ATP-dependent interactions between DnaJ, DnaK and GrpE are required for fully efficient folding. Also involved, together with DnaK and GrpE, in the DNA replication of plasmids through activation of initiation proteins. The chain is Chaperone protein DnaJ from Streptococcus pyogenes.